A 315-amino-acid polypeptide reads, in one-letter code: DNA-directed RNA polymerase subunit alpha (315 aa).

The tract at residues 1-228 is alpha N-terminal domain (alpha-NTD); that stretch reads MLEIEKPKIE…EHLRLFIGLT (228 aa). Positions 245 to 315 are alpha C-terminal domain (alpha-CTD); sequence KDKILEMTIE…LGLGFRKADD (71 aa).

Belongs to the RNA polymerase alpha chain family. As to quaternary structure, homodimer. The RNAP catalytic core consists of 2 alpha, 1 beta, 1 beta' and 1 omega subunit. When a sigma factor is associated with the core the holoenzyme is formed, which can initiate transcription.

The enzyme catalyses RNA(n) + a ribonucleoside 5'-triphosphate = RNA(n+1) + diphosphate. Functionally, DNA-dependent RNA polymerase catalyzes the transcription of DNA into RNA using the four ribonucleoside triphosphates as substrates. This Desulfitobacterium hafniense (strain DSM 10664 / DCB-2) protein is DNA-directed RNA polymerase subunit alpha.